Reading from the N-terminus, the 217-residue chain is ATP phosphoribosyltransferase (217 aa).

It belongs to the ATP phosphoribosyltransferase family. Short subfamily. In terms of assembly, heteromultimer composed of HisG and HisZ subunits.

It is found in the cytoplasm. The enzyme catalyses 1-(5-phospho-beta-D-ribosyl)-ATP + diphosphate = 5-phospho-alpha-D-ribose 1-diphosphate + ATP. Its pathway is amino-acid biosynthesis; L-histidine biosynthesis; L-histidine from 5-phospho-alpha-D-ribose 1-diphosphate: step 1/9. In terms of biological role, catalyzes the condensation of ATP and 5-phosphoribose 1-diphosphate to form N'-(5'-phosphoribosyl)-ATP (PR-ATP). Has a crucial role in the pathway because the rate of histidine biosynthesis seems to be controlled primarily by regulation of HisG enzymatic activity. The polypeptide is ATP phosphoribosyltransferase (Burkholderia lata (strain ATCC 17760 / DSM 23089 / LMG 22485 / NCIMB 9086 / R18194 / 383)).